The primary structure comprises 945 residues: Poly [ADP-ribose] polymerase 1 (945 aa).

The PARP-type 1 zinc finger occupies 10–96 (YAIEYAKSGR…KLRQEIQHFK (87 aa)). Cys-22, Cys-25, His-54, and Cys-57 together coordinate Zn(2+). Residues 117–183 (IKTEKSLSNR…DYEENFKIKA (67 aa)) form a PARP-type 2; degenerate zinc finger. The interval 195–251 (RRSTEPATPASASPTPPEAETPVLSAEGSPESSNKRPASSEIIEIDGEGNPDENDFA) is disordered. Positions 237–248 (IEIDGEGNPDEN) are enriched in acidic residues. In terms of domain architecture, PADR1 zinc-binding spans 258–397 (KEARLMEVQK…NQMSERLYIG (140 aa)). The interval 324–369 (GCPIICQTCSNGKIVYNSSCRTYVCTGYATEYSKCTYESKNPIRTP) is zinc ribbon. 4 residues coordinate Zn(2+): Cys-329, Cys-332, Cys-348, and Cys-358. Residues 464–563 (RCHVFKNEID…KHFRKMPGMF (100 aa)) enclose the WGR domain. Residues 586 to 704 (KTLLPKSVKE…DIKFAYDQIS (119 aa)) enclose the PARP alpha-helical domain. In terms of domain architecture, PARP catalytic spans 717–945 (DPVDINYQKL…RVKMHHARHL (229 aa)).

The protein belongs to the ARTD/PARP family.

It is found in the nucleus. The enzyme catalyses NAD(+) + (ADP-D-ribosyl)n-acceptor = nicotinamide + (ADP-D-ribosyl)n+1-acceptor + H(+).. It carries out the reaction L-aspartyl-[protein] + NAD(+) = 4-O-(ADP-D-ribosyl)-L-aspartyl-[protein] + nicotinamide. It catalyses the reaction L-glutamyl-[protein] + NAD(+) = 5-O-(ADP-D-ribosyl)-L-glutamyl-[protein] + nicotinamide. Its activity is regulated as follows. Inhibited by N-(6-oxo-5,6-dihydrophenanthridin-2-yl)-N,N-dimethylacetamide HCl (PJ34), 1,5-dihydroxyisoquinoline (DHQ) and 3-aminobenzamide (3AB). In terms of biological role, poly[ADP-ribose] polymerase modifies various nuclear proteins by poly(ADP-ribosyl)ation, a post-translational modification synthesized after DNA damage that appears as an obligatory step in a detection/signaling pathway leading to the reparation of DNA strand breaks and programmed cell death. Involved in protection of the genome against mutations. The chain is Poly [ADP-ribose] polymerase 1 from Caenorhabditis elegans.